The primary structure comprises 94 residues: MMGWNTVERNWKELKGKLKETWGDMTDDELDVIAGKREQLVGKIQTKYEIAREEAERQVNAFAHDCDAAKEPLKNVGEAVSSRQKSVKKRSLYT.

The interval K74–T94 is disordered. Residues K85–T94 show a composition bias toward basic residues.

It belongs to the UPF0337 (CsbD) family.

This is UPF0337 protein NE2439 from Nitrosomonas europaea (strain ATCC 19718 / CIP 103999 / KCTC 2705 / NBRC 14298).